We begin with the raw amino-acid sequence, 102 residues long: Large ribosomal subunit protein uL24 (102 aa).

This sequence belongs to the universal ribosomal protein uL24 family. As to quaternary structure, part of the 50S ribosomal subunit.

One of two assembly initiator proteins, it binds directly to the 5'-end of the 23S rRNA, where it nucleates assembly of the 50S subunit. Its function is as follows. One of the proteins that surrounds the polypeptide exit tunnel on the outside of the subunit. The polypeptide is Large ribosomal subunit protein uL24 (Rhizobium leguminosarum bv. trifolii (strain WSM2304)).